A 395-amino-acid chain; its full sequence is MTDKIINSGNLEAGYDSVIDKDSKYVMQTYGRQPLVLSKGKGAVVQDIYGKEYIDCVAGIAVNNVGHCHPTVVKAIQAQAEKLIHVSNLYYTEIQAEFAETLASITGMECVFFCNSGAEAVEAAMKLARVATGKSAFVAAEHSFHGRTIGALSVTHKSMYRDPFMPPVSSKTSFVPYSDADAIRKAISEDTAAVVLEPIQGEGGVNVPDPGYLKEVREICDETGTLLIFDEVQTGFGRTGTWFCKEQFGVEPDIMSMAKAIGGGFPMGAIAARSGLSFGRGQHASTFGGGPLACAAALASIQAIKEEKLLERSKEMGAYFTKKLSGMARDDIVEVRGKGLMIGVEIKYPCGKFVDFAREHGVLVNCTSDSVLRLVPPLVITKEQIDSVVDVLEQA.

Residues 117–118 (GA) and Phe-144 contribute to the pyridoxal 5'-phosphate site. A N(2)-acetyl-L-ornithine-binding site is contributed by Arg-147. Position 230–233 (230–233 (DEVQ)) interacts with pyridoxal 5'-phosphate. N6-(pyridoxal phosphate)lysine is present on Lys-259. Residue Ser-285 coordinates N(2)-acetyl-L-ornithine. Thr-286 is a pyridoxal 5'-phosphate binding site.

The protein belongs to the class-III pyridoxal-phosphate-dependent aminotransferase family. ArgD subfamily. In terms of assembly, homodimer. Pyridoxal 5'-phosphate serves as cofactor.

It localises to the cytoplasm. The enzyme catalyses N(2)-acetyl-L-ornithine + 2-oxoglutarate = N-acetyl-L-glutamate 5-semialdehyde + L-glutamate. The protein operates within amino-acid biosynthesis; L-arginine biosynthesis; N(2)-acetyl-L-ornithine from L-glutamate: step 4/4. The protein is Acetylornithine aminotransferase of Methanosarcina mazei (strain ATCC BAA-159 / DSM 3647 / Goe1 / Go1 / JCM 11833 / OCM 88) (Methanosarcina frisia).